A 328-amino-acid chain; its full sequence is Probable cell division protein WhiA (328 aa).

The H-T-H motif DNA-binding region spans 276 to 309; it reads SLEELGRLADPQMTKDAVAGRIRRLLHMADKKAS.

This sequence belongs to the WhiA family.

Involved in cell division and chromosome segregation. This chain is Probable cell division protein WhiA, found in Corynebacterium diphtheriae (strain ATCC 700971 / NCTC 13129 / Biotype gravis).